The following is a 481-amino-acid chain: FBD-associated F-box protein At5g44490 (481 aa).

The region spanning 17 to 64 (DLMSKLTDALISQVLFYLPTKEAVSTSVLSSRWKSVWLLIPDLDLNSS) is the F-box domain. In terms of domain architecture, FBD spans 370-423 (EKSVSFSSVPQCLLSSLEFVEIKISRFGIISLGIGIARFFVENSVVLKKLVVHS).

This chain is FBD-associated F-box protein At5g44490, found in Arabidopsis thaliana (Mouse-ear cress).